The sequence spans 84 residues: Dolichol phosphate-mannose biosynthesis regulatory protein (84 aa).

2 consecutive transmembrane segments (helical) span residues 11-31 and 49-69; these read LGLV…VILL and YAVA…GLFI.

It belongs to the DPM2 family. Component of the dolichol-phosphate mannose (DPM) synthase complex composed of DPM1, DPM2 and DPM3; in the complex interacts directly with DPM3. Component of the glycosylphosphatidylinositol-N-acetylglucosaminyltransferase (GPI-GnT) complex composed at least by PIGA, PIGC, PIGH, PIGP, PIGQ, PIGY and DPM2. Interacts with PIGA, PIGC and PIGQ.

It is found in the endoplasmic reticulum membrane. It participates in protein modification; protein glycosylation. Regulates the biosynthesis of dolichol phosphate-mannose. Regulatory subunit of the dolichol-phosphate mannose (DPM) synthase complex; essential for the ER localization and stable expression of DPM1. Part of the glycosylphosphatidylinositol-N-acetylglucosaminyltransferase (GPI-GnT) complex that catalyzes the transfer of N-acetylglucosamine from UDP-N-acetylglucosamine to phosphatidylinositol and participates in the first step of GPI biosynthesis. May act by regulating the GPI-GNT complex. The protein is Dolichol phosphate-mannose biosynthesis regulatory protein of Homo sapiens (Human).